A 1508-amino-acid chain; its full sequence is DNA-directed RNA polymerase subunit beta' (1508 aa).

4 residues coordinate Zn(2+): cysteine 71, cysteine 73, cysteine 86, and cysteine 89. Aspartate 470, aspartate 472, and aspartate 474 together coordinate Mg(2+). Zn(2+) is bound by residues cysteine 804, cysteine 878, cysteine 885, and cysteine 888.

Belongs to the RNA polymerase beta' chain family. As to quaternary structure, the RNAP catalytic core consists of 2 alpha, 1 beta, 1 beta' and 1 omega subunit. When a sigma factor is associated with the core the holoenzyme is formed, which can initiate transcription. Requires Mg(2+) as cofactor. Zn(2+) is required as a cofactor.

The catalysed reaction is RNA(n) + a ribonucleoside 5'-triphosphate = RNA(n+1) + diphosphate. In terms of biological role, DNA-dependent RNA polymerase catalyzes the transcription of DNA into RNA using the four ribonucleoside triphosphates as substrates. The protein is DNA-directed RNA polymerase subunit beta' of Campylobacter fetus subsp. fetus (strain 82-40).